Consider the following 222-residue polypeptide: MFSKQVTDSPIYKWFDNRLEIQAISDDITSKYVPPHVNIFYCLGGITLVCFIIQFATGFAMTFYYKPTVTDAFASVQYIMNEVNFGWLIRSIHRWSASMMVLMMILHVFRVYLTGGFKKPRELTWMTGVILAVITVSFGVTGYSLPWDQVGYWAVKIVSGVPAAIPVVGDQMVELLRGGQSVGQATLTRFYSLHTFVFPWLIAVFMLMHFLMIRKQGISGPL.

Residues 39–59 (IFYCLGGITLVCFIIQFATGF) traverse the membrane as a helical segment. Position 42 (Cys-42) interacts with heme c. The heme b site is built by His-93 and His-107. 3 consecutive transmembrane segments (helical) span residues 97 to 117 (ASMM…TGGF), 123 to 143 (LTWM…VTGY), and 193 to 213 (LHTF…FLMI). Heme b is bound by residues His-194 and His-209.

This sequence belongs to the cytochrome b family. PetB subfamily. The 4 large subunits of the cytochrome b6-f complex are cytochrome b6, subunit IV (17 kDa polypeptide, PetD), cytochrome f and the Rieske protein, while the 4 small subunits are PetG, PetL, PetM and PetN. The complex functions as a dimer. Heme b serves as cofactor. The cofactor is heme c.

It localises to the cellular thylakoid membrane. In terms of biological role, component of the cytochrome b6-f complex, which mediates electron transfer between photosystem II (PSII) and photosystem I (PSI), cyclic electron flow around PSI, and state transitions. This chain is Cytochrome b6, found in Rippkaea orientalis (strain PCC 8801 / RF-1) (Cyanothece sp. (strain PCC 8801)).